We begin with the raw amino-acid sequence, 760 residues long: NAD(P)H-quinone oxidoreductase subunit 5, chloroplastic (760 aa).

16 helical membrane passes run 9 to 29 (WIISFVTLPVPMLIGMGLLLF), 39 to 59 (IWAFPSVLLLSIVMVFSTDLF), 89 to 109 (IDPLTSILLILITTVGILVLV), 125 to 145 (FVYMSFFNTSMLGLVTSSNLI), 147 to 167 (IYIFWELVGMCSYLLIGFWFT), 185 to 205 (GDFGLLLGILGLYWITGSFEF), 221 to 241 (NEVHFLFVTLCAFLLFSGAIA), 260 to 280 (TPISALIHAATMVAAGIFLVA), 282 to 302 (LLPLFVVIPYIMKLIALIGII), 329 to 349 (LGYTMLALGMGSYRAALFHLI), 356 to 376 (ALLFLGSGSIIHSMEGIVGYS), 398 to 418 (IAFLLGTLSLCGIPPLACFWS), 429 to 449 (YSPIFAIIAFSTAGLTAFYMF), 556 to 576 (ILFPMLVLVLFTLFIGAIGIP), 620 to 640 (FSVSIASFGIFIASSLYKPIY), and 734 to 754 (FYLLLYLFYVLIFLLISSSIF).

It belongs to the complex I subunit 5 family. NDH is composed of at least 16 different subunits, 5 of which are encoded in the nucleus.

It localises to the plastid. The protein resides in the chloroplast thylakoid membrane. It catalyses the reaction a plastoquinone + NADH + (n+1) H(+)(in) = a plastoquinol + NAD(+) + n H(+)(out). It carries out the reaction a plastoquinone + NADPH + (n+1) H(+)(in) = a plastoquinol + NADP(+) + n H(+)(out). Functionally, NDH shuttles electrons from NAD(P)H:plastoquinone, via FMN and iron-sulfur (Fe-S) centers, to quinones in the photosynthetic chain and possibly in a chloroplast respiratory chain. The immediate electron acceptor for the enzyme in this species is believed to be plastoquinone. Couples the redox reaction to proton translocation, and thus conserves the redox energy in a proton gradient. The chain is NAD(P)H-quinone oxidoreductase subunit 5, chloroplastic (ndhF) from Populus alba (White poplar).